Consider the following 673-residue polypeptide: UvrABC system protein B (673 aa).

Residues 26 to 414 form the Helicase ATP-binding domain; that stretch reads EGLEDGLAHQ…GDEVVDQVVR (389 aa). ATP is bound at residue 39-46; it reads GVTGSGKT. The Beta-hairpin signature appears at 92–115; it reads YYDYYQPEAYVPSSDTFIEKDASI. The Helicase C-terminal domain occupies 431 to 597; it reads QVDDLLSEIR…GLNKKVVDIL (167 aa). The UVR domain maps to 633–668; sequence QQKIHELEGQMMQHAQNLEFEEAAQIRDQLHQLREL.

This sequence belongs to the UvrB family. Forms a heterotetramer with UvrA during the search for lesions. Interacts with UvrC in an incision complex.

It is found in the cytoplasm. Functionally, the UvrABC repair system catalyzes the recognition and processing of DNA lesions. A damage recognition complex composed of 2 UvrA and 2 UvrB subunits scans DNA for abnormalities. Upon binding of the UvrA(2)B(2) complex to a putative damaged site, the DNA wraps around one UvrB monomer. DNA wrap is dependent on ATP binding by UvrB and probably causes local melting of the DNA helix, facilitating insertion of UvrB beta-hairpin between the DNA strands. Then UvrB probes one DNA strand for the presence of a lesion. If a lesion is found the UvrA subunits dissociate and the UvrB-DNA preincision complex is formed. This complex is subsequently bound by UvrC and the second UvrB is released. If no lesion is found, the DNA wraps around the other UvrB subunit that will check the other stand for damage. In Salmonella paratyphi A (strain ATCC 9150 / SARB42), this protein is UvrABC system protein B.